Here is a 230-residue protein sequence, read N- to C-terminus: 2,3-bisphosphoglycerate-dependent phosphoglycerate mutase (230 aa).

Substrate contacts are provided by residues 8–15 (RHGESEWN), 21–22 (TG), Arg60, 87–90 (ERHY), Lys98, 114–115 (RR), and 183–184 (GN). Residue His9 is the Tele-phosphohistidine intermediate of the active site. The active-site Proton donor/acceptor is Glu87.

It belongs to the phosphoglycerate mutase family. BPG-dependent PGAM subfamily.

It catalyses the reaction (2R)-2-phosphoglycerate = (2R)-3-phosphoglycerate. It functions in the pathway carbohydrate degradation; glycolysis; pyruvate from D-glyceraldehyde 3-phosphate: step 3/5. Its function is as follows. Catalyzes the interconversion of 2-phosphoglycerate and 3-phosphoglycerate. This Streptococcus pneumoniae (strain P1031) protein is 2,3-bisphosphoglycerate-dependent phosphoglycerate mutase.